The chain runs to 199 residues: NADH-quinone oxidoreductase subunit C (199 aa).

It belongs to the complex I 30 kDa subunit family. NDH-1 is composed of 14 different subunits. Subunits NuoB, C, D, E, F, and G constitute the peripheral sector of the complex.

It is found in the cell inner membrane. It catalyses the reaction a quinone + NADH + 5 H(+)(in) = a quinol + NAD(+) + 4 H(+)(out). In terms of biological role, NDH-1 shuttles electrons from NADH, via FMN and iron-sulfur (Fe-S) centers, to quinones in the respiratory chain. The immediate electron acceptor for the enzyme in this species is believed to be ubiquinone. Couples the redox reaction to proton translocation (for every two electrons transferred, four hydrogen ions are translocated across the cytoplasmic membrane), and thus conserves the redox energy in a proton gradient. The sequence is that of NADH-quinone oxidoreductase subunit C from Leptothrix cholodnii (strain ATCC 51168 / LMG 8142 / SP-6) (Leptothrix discophora (strain SP-6)).